Consider the following 309-residue polypeptide: Protein FdhE homolog (309 aa).

This sequence belongs to the FdhE family.

The protein localises to the cytoplasm. Necessary for formate dehydrogenase activity. This Yersinia enterocolitica serotype O:8 / biotype 1B (strain NCTC 13174 / 8081) protein is Protein FdhE homolog.